Here is a 691-residue protein sequence, read N- to C-terminus: Transcription termination factor Rho (691 aa).

The tract at residues 48 to 303 is disordered; sequence ISDHQRGGSV…PEVDETELTE (256 aa). Residues 50 to 64 are compositionally biased toward basic and acidic residues; it reads DHQRGGSVADRDAAE. Low complexity-rich tracts occupy residues 65-92 and 105-119; these read RAAQ…PAAE and DTSA…QPQA. Composition is skewed to basic and acidic residues over residues 120–158 and 188–273; these read EARE…SERR and DADR…EGGR. The 84-residue stretch at 307 to 390 folds into the Rho RNA-BD domain; that stretch reads LQPVAGILDV…VKISSVNGQP (84 aa). Residues 433–438, 445–450, and Arg476 contribute to the ATP site; these read GKGQRG and KAGKTM.

The protein belongs to the Rho family. As to quaternary structure, homohexamer. The homohexamer assembles into an open ring structure.

In terms of biological role, facilitates transcription termination by a mechanism that involves Rho binding to the nascent RNA, activation of Rho's RNA-dependent ATPase activity, and release of the mRNA from the DNA template. This chain is Transcription termination factor Rho, found in Micrococcus luteus (Micrococcus lysodeikticus).